We begin with the raw amino-acid sequence, 128 residues long: ADA histone acetyltransferase complex component 2 (128 aa).

Its subcellular location is the cytoplasm. It localises to the nucleus. In Saccharomyces cerevisiae (strain ATCC 204508 / S288c) (Baker's yeast), this protein is ADA histone acetyltransferase complex component 2 (AHC2).